We begin with the raw amino-acid sequence, 564 residues long: Dihydropyrimidinase-related protein 5 (564 aa).

Threonine 509 and threonine 514 each carry phosphothreonine. Residues serine 532 and serine 538 each carry the phosphoserine modification. Arginine 559 is subject to Omega-N-methylarginine.

The protein belongs to the metallo-dependent hydrolases superfamily. Hydantoinase/dihydropyrimidinase family. In terms of assembly, homotetramer, and heterotetramer with other DPYS-like proteins. Interacts with DPYSL2, DPYSL3 and DPYSL4. Interacts with SEPTIN4 isoform 4. Interacts with MAP2 and TUBB3. As to expression, detected in brain.

Its subcellular location is the cytoplasm. In terms of biological role, involved in the negative regulation of dendrite outgrowth. This Mus musculus (Mouse) protein is Dihydropyrimidinase-related protein 5 (Dpysl5).